A 171-amino-acid polypeptide reads, in one-letter code: Putative phosphoesterase BPUM_1117 (171 aa).

The active-site Proton donor is the histidine 34. Short sequence motifs (HXTX) lie at residues 34–37 (HLTL) and 115–118 (HVTV). The active-site Proton acceptor is the histidine 115.

The protein belongs to the 2H phosphoesterase superfamily. YjcG family.

This chain is Putative phosphoesterase BPUM_1117, found in Bacillus pumilus (strain SAFR-032).